A 716-amino-acid chain; its full sequence is Cytoplasmic polyadenylation element-binding protein 3 (716 aa).

Basic and acidic residues predominate over residues 1–11 (MQDDLLMDKSK). Disordered stretches follow at residues 1-118 (MQDD…WSTG) and 162-209 (AQTQ…RSAA). Low complexity-rich tracts occupy residues 13-31 (QPQSQQQQRQQQQQQQQLQ) and 54-63 (SSAVPALSPA). The span at 91-100 (PQQPPPPQEP) shows a compositional bias: pro residues. The segment covering 107–118 (LSPSFGSTWSTG) has biased composition (polar residues). A compositionally biased stretch (pro residues) spans 169 to 186 (QPPPPAPQPPQPAQPPQA). Residues 187 to 209 (QPSQQRRSPASPSQAPYAQRSAA) show a composition bias toward low complexity. Phosphoserine occurs at positions 194, 197, and 291. Arg309 carries the asymmetric dimethylarginine modification. A phosphoserine mark is found at Ser419 and Ser420. RRM domains lie at 459-550 (RKVF…PWNL) and 567-649 (KTIF…PYVL).

This sequence belongs to the RRM CPEB family. In terms of assembly, following synaptic activity, aggregates to form amyloid-like oligomers. Aggregation requires an intact actin cytoskeleton. Interacts with STAT5B; this inhibits STAT5B-mediated transcriptional activation. Interacts with E3 ubiquitin-protein ligase NEURL1; this leads to monoubiquitination and activation of CPEB3. Interacts with CAPN2; this leads to cleavage of CPEB3. Interacts (via C-terminal RNA-binding region) with TOB1; TOB1 also binds CNOT7/CAF1 and recruits it to CPEB3 to form a ternary complex. Interacts with SUMO-conjugating enzyme UBC9. Interacts with IPO5; the interaction is enhanced in a RAN-regulated manner following neuronal stimulation and mediates CPEB3 nuclear import. Interacts with exportin XPO1/CRM1. In terms of processing, activated by NEURL1-mediated monoubiquitination, resulting in the growth of new dendritic spines and increased levels of GRIA1 and GRIA2. NEURL1-mediated monoubiquitination facilitates synaptic plasticity and hippocampal-dependent memory storage. Post-translationally, under basal unstimulated conditions when CPEB3 is mainly unaggregated, sumoylated and acts as a translational repressor. Following neuronal stimulation, becomes desumoylated and aggregated which is required for the translation of mRNA targets and for dendritic filopodia formation. Following neuronal stimulation, cleaved by CAPN2 which abolishes its translational repressor activity, leading to translation of CPEB3 target mRNAs. In terms of processing, phosphorylation is enhanced by neuronal stimulation. Highly expressed in brain (at protein level). In brain, expressed in the hippocampus, granule cells and interneurons of the cerebellum, and mitral cells of the olfactory bulb (at protein level). Detected in the spinal cord and in peripheral dorsal root ganglia (at protein level). In the retina, strongly expressed in the retinal ganglion layer and, to a lesser extent, in the inner margin of the inner nuclear layer with expression also detected in the inner and outer plexiform layers (at protein level). Highly expressed in brain and heart, less in liver, kidney, embryo, skeletal muscle, lung and ovary. Weakly expressed in granular cells of dentate gyrus and the pyramidal cells of CA3 and CA1 of the hippocampus.

The protein localises to the cytoplasm. The protein resides in the nucleus. Its subcellular location is the synapse. It localises to the cell projection. It is found in the dendrite. The protein localises to the postsynaptic density. In terms of biological role, sequence-specific RNA-binding protein which acts as a translational repressor in the basal unstimulated state but, following neuronal stimulation, acts as a translational activator. In contrast to CPEB1, does not bind to the cytoplasmic polyadenylation element (CPE), a uridine-rich sequence element within the mRNA 3'-UTR, but binds to a U-rich loop within a stem-loop structure. Required for the consolidation and maintenance of hippocampal-based long term memory. In the basal state, binds to the mRNA 3'-UTR of the glutamate receptors GRIA1 and GRIA2 and negatively regulates their translation. Also represses the translation of DLG4, GRIN1 GRIN2A and GRIN2B. When activated, acts as a translational activator of GRIA1 and GRIA2. In the basal state, suppresses SUMO2 translation but activates it following neuronal stimulation. Binds to the 3'-UTR of TRPV1 mRNA and represses TRPV1 translation which is required to maintain normal thermoception. Binds actin mRNA, leading to actin translational repression in the basal state and to translational activation following neuronal stimulation. Negatively regulates target mRNA levels by binding to TOB1 which recruits CNOT7/CAF1 to a ternary complex and this leads to target mRNA deadenylation and decay. In addition to its role in translation, binds to and inhibits the transcriptional activation activity of STAT5B without affecting its dimerization or DNA-binding activity. This, in turn, represses transcription of the STAT5B target gene EGFR which has been shown to play a role in enhancing learning and memory performance. In contrast to CPEB1, CPEB2 and CPEB4, not required for cell cycle progression. This is Cytoplasmic polyadenylation element-binding protein 3 (Cpeb3) from Mus musculus (Mouse).